The chain runs to 787 residues: Integrin beta-3 (787 aa).

Residues 1 to 25 form the signal peptide; the sequence is MRAQWPGQLWAALLALGALAGVVVG. Topologically, residues 26–717 are extracellular; sequence ESNICTTRGV…EEPECPKGPD (692 aa). A PSI domain is found at 29–75; sequence ICTTRGVNSCQQCLAVSPVCAWCSDETLSQGSPRCNLKENLLKDNCA. Intrachain disulfides connect Cys-30-Cys-48, Cys-38-Cys-460, Cys-41-Cys-63, Cys-51-Cys-74, Cys-202-Cys-209, Cys-257-Cys-298, Cys-399-Cys-411, Cys-431-Cys-458, Cys-462-Cys-482, Cys-473-Cys-485, Cys-487-Cys-496, Cys-498-Cys-528, Cys-511-Cys-526, Cys-520-Cys-531, Cys-533-Cys-546, Cys-548-Cys-569, Cys-553-Cys-567, Cys-561-Cys-572, and Cys-574-Cys-583. Residues 134–376 enclose the VWFA domain; that stretch reads DYPVDIYYLM…QLIVDAYGKI (243 aa). Residues Ser-146 and Ser-148 each contribute to the Mg(2+) site. Residues Ser-148, Asp-151, Asp-152, and Asp-183 each contribute to the Ca(2+) site. Residues 202–209 form a CX3CL1-binding region; sequence CYNMKNAC. The tract at residues 202 to 209 is involved in CX3CL1-, NRG1-, FGF1- and IGF1-binding; the sequence is CYNMKNAC. Ca(2+) is bound by residues Asn-240, Asp-242, Pro-244, Glu-245, and Asp-276. Mg(2+) is bound at residue Glu-245. Positions 292 to 312 are CX3CL1-binding; sequence LPNDGHCHIGTDNHYSASTTM. Asn-345 and Asn-396 each carry an N-linked (GlcNAc...) asparagine glycan. 4 I-EGF domains span residues 462–497, 498–547, 548–584, and 585–624; these read CQAF…SMCE, CSEE…KYCE, CDDF…YYCN, and CTTR…DTCE. Asn-477 is a glycosylation site (N-linked (GlcNAc...) asparagine). A glycan (N-linked (GlcNAc...) asparagine) is linked at Asn-584. 9 disulfides stabilise this stretch: Cys-585-Cys-608, Cys-592-Cys-606, Cys-600-Cys-611, Cys-613-Cys-623, Cys-626-Cys-629, Cys-633-Cys-680, Cys-639-Cys-660, Cys-642-Cys-656, and Cys-688-Cys-712. Asn-679 carries N-linked (GlcNAc...) asparagine glycosylation. A helical transmembrane segment spans residues 718-740; it reads ILVVLLSVMGAILLIGLATLLIW. Residues 741-787 are Cytoplasmic-facing; that stretch reads KLLITIHDRKEFAKFEEERARAKWDTANNPLYKEATSTFTNITYRGT. A Phosphothreonine modification is found at Thr-766. Residue Tyr-772 is modified to Phosphotyrosine. An LIR motif is present at residues 776 to 782; it reads TSTFTNI. Thr-778 is subject to Phosphothreonine. Position 784 is a phosphotyrosine (Tyr-784).

Belongs to the integrin beta chain family. Heterodimer of an alpha and a beta subunit. Beta-3 (ITGB3) associates with either alpha-IIB (ITGA2B) or alpha-V (ITGAV). Interacts with FLNB and COMP. Interacts with PDIA6 following platelet stimulation. Interacts with SYK; upon activation by ITGB3 promotes platelet adhesion. Interacts with MYO10. Interacts with DAB2. Interacts with FERMT2. Integrin ITGAV:ITGB3 interacts with FBLN5 (via N-terminus). Interacts with EMP2; regulates the levels of the heterodimer ITGA5:ITGB3 integrin expression on the plasma membrane. ITGAV:ITGB3 interacts with CCN3. ITGAV:ITGB3 and ITGA2B:ITGB3 interact with SELP (via C-type lectin domain); the interaction mediates cell-cell interaction and adhesion. ITGAV:ITGB3 interacts with AGRA2. ITGAV:ITGB3 is found in a ternary complex with CX3CR1 and CX3CL1. ITGAV:ITGB3 is found in a ternary complex with NRG1 and ERBB3. ITGAV:ITGB3 is found in a ternary complex with FGF1 and FGFR1. ITGAV:ITGB3 interacts with FGF2; it is likely that FGF2 can simultaneously bind ITGAV:ITGB3 and FGF receptors. ITGAV:ITGB3 binds to IL1B. ITGAV:ITGB3 is found in a ternary complex with IGF1 and IGF1R. ITGAV:ITGB3 interacts with IGF2. ITGAV:ITGB3 interacts with FBN1. ITGAV:ITGB3 interacts with CD9, CD81 and CD151 (via second extracellular domain). Interacts (via the allosteric site (site 2)) with CXCL12 in a CXCR4-independent manner. Interacts with MXRA8/DICAM; the interaction inhibits ITGAV:ITGB3 heterodimer formation. ITGAV:ITGB3 interacts with PTN. Forms a complex with PTPRZ1 and PTN that stimulates endothelial cell migration through ITGB3 Tyr-772 phosphorylation. ITGAV:ITGB3 interacts with SLC6A4. Interacts with SLC6A4 (via C-terminus); this interaction regulates SLC6A4 trafficking. ITGA2B:ITGB3 interacts with PPIA/CYPA; the interaction is ROS and PPIase activity-dependent and is increased in the presence of thrombin. Interacts with tensin TNS3; TNS3 also interacts with PEAK1, thus acting as an adapter molecule to bridge the association of PEAK1 with ITGB3. Interacts with TM4SF19. In terms of processing, phosphorylated on tyrosine residues in response to thrombin-induced platelet aggregation. Probably involved in outside-in signaling.

It is found in the cell membrane. The protein resides in the cell projection. Its subcellular location is the lamellipodium membrane. It localises to the cell junction. The protein localises to the focal adhesion. It is found in the postsynaptic cell membrane. The protein resides in the synapse. Its function is as follows. Integrin alpha-V/beta-3 (ITGAV:ITGB3) is a receptor for cytotactin, fibronectin, laminin, matrix metalloproteinase-2, osteopontin, osteomodulin, prothrombin, thrombospondin, vitronectin and von Willebrand factor. Integrin alpha-IIB/beta-3 (ITGA2B:ITGB3) is a receptor for fibronectin, fibrinogen, plasminogen, prothrombin, thrombospondin and vitronectin. Integrins alpha-IIB/beta-3 and alpha-V/beta-3 recognize the sequence R-G-D in a wide array of ligands. Integrin alpha-IIB/beta-3 recognizes the sequence H-H-L-G-G-G-A-K-Q-A-G-D-V in fibrinogen gamma chain. Following activation integrin alpha-IIB/beta-3 brings about platelet/platelet interaction through binding of soluble fibrinogen. This step leads to rapid platelet aggregation which physically plugs ruptured endothelial surfaces. Fibrinogen binding enhances SELP expression in activated platelets. ITGAV:ITGB3 binds to fractalkine (CX3CL1) and acts as its coreceptor in CX3CR1-dependent fractalkine signaling. ITGAV:ITGB3 binds to NRG1 (via EGF domain) and this binding is essential for NRG1-ERBB signaling. ITGAV:ITGB3 binds to FGF1 and this binding is essential for FGF1 signaling. ITGAV:ITGB3 binds to FGF2 and this binding is essential for FGF2 signaling. ITGAV:ITGB3 binds to IGF1 and this binding is essential for IGF1 signaling. ITGAV:ITGB3 binds to IGF2 and this binding is essential for IGF2 signaling. ITGAV:ITGB3 binds to IL1B and this binding is essential for IL1B signaling. ITGAV:ITGB3 binds to PLA2G2A via a site (site 2) which is distinct from the classical ligand-binding site (site 1) and this induces integrin conformational changes and enhanced ligand binding to site 1. ITGAV:ITGB3 acts as a receptor for fibrillin-1 (FBN1) and mediates R-G-D-dependent cell adhesion to FBN1. ITGAV:ITGB3 binds to the Lilrb4a/Gp49b receptor and enhances the Lilrb4a-mediated inhibition of mast cell activation. ITGAV:ITGB3 also suppresses marginal zone B cell antibody production through its interaction with Lilrb4a. In brain, plays a role in synaptic transmission and plasticity. Involved in the regulation of the serotonin neurotransmission, is required to localize to specific compartments within the synapse the serotonin receptor SLC6A4 and for an appropriate reuptake of serotonin. Controls excitatory synaptic strength by regulating GRIA2-containing AMPAR endocytosis, which affects AMPAR abundance and composition. ITGAV:ITGB3 act as a receptor for CD40LG. ITGAV:ITGB3 acts as a receptor for IBSP and promotes cell adhesion and migration to IBSP. This Mus musculus (Mouse) protein is Integrin beta-3.